The following is a 275-amino-acid chain: Interleukin-2 receptor subunit alpha (275 aa).

Positions 1-21 (MEPSLLMWRFFVFIVVPGCVT) are cleaved as a signal peptide. One can recognise a Sushi 1 domain in the interval 22–81 (EACHDDPPSLRNAMFKVFRYEVGTMINCDCKTGFRRVSAVMRCVGDSSHSAWENRCFCNS). The Extracellular segment spans residues 22–243 (EACHDDPPSL…DTFIFTTEYQ (222 aa)). Intrachain disulfides connect Cys-24–Cys-64, Cys-49–Cys-77, and Cys-51–Cys-79. N-linked (GlcNAc...) asparagine glycosylation occurs at Asn-80. Residues 88-130 (QVKQVTPAPEEHREKKHTDAQNQTQPPEEADLPGHCEEPPPWE) are disordered. Basic and acidic residues predominate over residues 96 to 106 (PEEHREKKHTD). A glycan (N-linked (GlcNAc...) asparagine) is linked at Asn-109. A compositionally biased stretch (basic and acidic residues) spans 119–130 (LPGHCEEPPPWE). The Sushi 2 domain occupies 121-186 (GHCEEPPPWE…WTRPRLKCIR (66 aa)). 2 cysteine pairs are disulfide-bonded: Cys-123–Cys-168 and Cys-152–Cys-184. Positions 188-221 (GEHGQASDDAEPQESTEAPPGSGTFLPTRMAGTT) are disordered. A helical membrane pass occupies residues 244–262 (IAVAGCTLLLASILLLSCL). At 263–275 (TWQRKWKKNRRTI) the chain is on the cytoplasmic side.

Non-covalent dimer of an alpha and a beta subunit. IL2R exists in 3 different forms: a high affinity dimer, an intermediate affinity monomer (beta subunit), and a low affinity monomer (alpha subunit). The high and intermediate affinity forms also associate with a gamma subunit.

The protein localises to the membrane. Its function is as follows. Receptor for interleukin-2. The receptor is involved in the regulation of immune tolerance by controlling regulatory T cells (TREGs) activity. TREGs suppress the activation and expansion of autoreactive T-cells. The protein is Interleukin-2 receptor subunit alpha (IL2RA) of Bos taurus (Bovine).